Here is a 338-residue protein sequence, read N- to C-terminus: Eukaryotic translation initiation factor 3 subunit H (338 aa).

Residues 22 to 154 (VQCDGLAVMK…LKAYRLTPQA (133 aa)) form the MPN domain.

Belongs to the eIF-3 subunit H family. Component of the eukaryotic translation initiation factor 3 (eIF-3) complex. The eIF-3 complex interacts with pix. Interacts with mxt.

The protein localises to the cytoplasm. In terms of biological role, component of the eukaryotic translation initiation factor 3 (eIF-3) complex, which is involved in protein synthesis of a specialized repertoire of mRNAs and, together with other initiation factors, stimulates binding of mRNA and methionyl-tRNAi to the 40S ribosome. The eIF-3 complex specifically targets and initiates translation of a subset of mRNAs involved in cell proliferation. This chain is Eukaryotic translation initiation factor 3 subunit H, found in Drosophila sechellia (Fruit fly).